Reading from the N-terminus, the 68-residue chain is DNA-directed RNA polymerase subunit omega (68 aa).

Belongs to the RNA polymerase subunit omega family. The RNAP catalytic core consists of 2 alpha, 1 beta, 1 beta' and 1 omega subunit. When a sigma factor is associated with the core the holoenzyme is formed, which can initiate transcription.

The catalysed reaction is RNA(n) + a ribonucleoside 5'-triphosphate = RNA(n+1) + diphosphate. In terms of biological role, promotes RNA polymerase assembly. Latches the N- and C-terminal regions of the beta' subunit thereby facilitating its interaction with the beta and alpha subunits. This chain is DNA-directed RNA polymerase subunit omega, found in Desulfitobacterium hafniense (strain DSM 10664 / DCB-2).